Reading from the N-terminus, the 123-residue chain is Phosphoribosyl-AMP cyclohydrolase (123 aa).

Asp-76 is a binding site for Mg(2+). Cys-77 is a binding site for Zn(2+). The Mg(2+) site is built by Asp-78 and Asp-80. Residues Cys-93 and Cys-100 each coordinate Zn(2+).

This sequence belongs to the PRA-CH family. In terms of assembly, homodimer. Requires Mg(2+) as cofactor. Zn(2+) serves as cofactor.

It is found in the cytoplasm. It carries out the reaction 1-(5-phospho-beta-D-ribosyl)-5'-AMP + H2O = 1-(5-phospho-beta-D-ribosyl)-5-[(5-phospho-beta-D-ribosylamino)methylideneamino]imidazole-4-carboxamide. The protein operates within amino-acid biosynthesis; L-histidine biosynthesis; L-histidine from 5-phospho-alpha-D-ribose 1-diphosphate: step 3/9. Catalyzes the hydrolysis of the adenine ring of phosphoribosyl-AMP. This is Phosphoribosyl-AMP cyclohydrolase from Methanocorpusculum labreanum (strain ATCC 43576 / DSM 4855 / Z).